We begin with the raw amino-acid sequence, 1282 residues long: Crescerin-like protein che-12 (1282 aa).

TOG regions lie at residues 33-240 (DFDT…EHTE) and 268-515 (PSLV…MDSF). HEAT repeat units lie at residues 59–96 (QKKG…TFGS), 100–137 (YCMC…LKPE), 162–209 (ELHH…FIGN), 261–300 (RLRF…QITP), 308–345 (PHLH…HLKG), 349–386 (AHIQ…NINP), 388–421 (TVGG…TISP), and 424–461 (FNLQ…LLNG). The disordered stretch occupies residues 566 to 714 (IQQQGQAEKP…RSFDDRPAKA (149 aa)). 2 stretches are compositionally biased toward low complexity: residues 575–592 (PSFS…HQAQ) and 633–644 (SAASNPNSSTSS). The span at 702-712 (DPPRSFDDRPA) shows a compositional bias: basic and acidic residues. TOG regions lie at residues 800–1022 (NMSV…ANVE) and 1066–1282 (TELL…ALIR). 7 HEAT repeats span residues 838–875 (DNLK…NLNS), 879–917 (SEME…AATA), 919–953 (KALQ…IQGS), 961–998 (NALS…DPNF), 1095–1132 (ASDT…SMAK), 1177–1214 (IEPV…LAYK), and 1219–1258 (QVEV…LIGE).

Belongs to the Crescerin family. In terms of tissue distribution, detected in a subset of amphid neurons that lack wing- or finger-like ciliary extensions. Likewise, detected in phasmid neurons.

Its subcellular location is the cell projection. The protein resides in the cilium. It localises to the perikaryon. It is found in the dendrite. Its function is as follows. Required for normal structure and function of sensory cilia on amphid neurons, especially for the formation of distal ciliary structures, but is less important for normal assembly of middle and basal ciliary structures. Plays a role in the organization of axoneme microtubule bundles in sensory cilia. Required for normal structure and function of the ASER neuron that mediates attraction to NaCl. Required for normal chemotaxis to NaCl. Required for normal avoidance response to high osmolarity. In contrast, is not required for normal chemotaxis to isoamyl alcohol. Does not play a role in intraflagella transport (IFT). Promotes dauer formation in response to pheromones such as the ascarosides ascr#2, ascr#3, ascr#5, ascr#8 and icas#9. The chain is Crescerin-like protein che-12 from Caenorhabditis elegans.